The sequence spans 131 residues: Global transcriptional regulator Spx (131 aa).

Cys10 and Cys13 are oxidised to a cystine.

Belongs to the ArsC family. Spx subfamily. In terms of assembly, interacts with the C-terminal domain of the alpha subunit of the RNAP.

The protein resides in the cytoplasm. Its function is as follows. Global transcriptional regulator that plays a key role in stress response and exerts either positive or negative regulation of genes. Acts by interacting with the C-terminal domain of the alpha subunit of the RNA polymerase (RNAP). This interaction can enhance binding of RNAP to the promoter region of target genes and stimulate their transcription, or block interaction of RNAP with activator. In Staphylococcus saprophyticus subsp. saprophyticus (strain ATCC 15305 / DSM 20229 / NCIMB 8711 / NCTC 7292 / S-41), this protein is Global transcriptional regulator Spx.